The following is a 173-amino-acid chain: RNA pyrophosphohydrolase (173 aa).

A Nudix hydrolase domain is found at 6–149; that stretch reads GFRANVGIII…KRDVYRKVMK (144 aa). Residues 38 to 59 carry the Nudix box motif; that stretch reads GGVDDGETPEEAMYRELYEEVG.

It belongs to the Nudix hydrolase family. RppH subfamily. A divalent metal cation serves as cofactor.

Accelerates the degradation of transcripts by removing pyrophosphate from the 5'-end of triphosphorylated RNA, leading to a more labile monophosphorylated state that can stimulate subsequent ribonuclease cleavage. The sequence is that of RNA pyrophosphohydrolase from Shewanella woodyi (strain ATCC 51908 / MS32).